The sequence spans 247 residues: DNA polymerase sliding clamp (247 aa).

Belongs to the PCNA family. Homotrimer. The subunits circularize to form a toroid; DNA passes through its center. Replication factor C (RFC) is required to load the toroid on the DNA.

Its function is as follows. Sliding clamp subunit that acts as a moving platform for DNA processing. Responsible for tethering the catalytic subunit of DNA polymerase and other proteins to DNA during high-speed replication. The polypeptide is DNA polymerase sliding clamp (Thermofilum pendens (strain DSM 2475 / Hrk 5)).